We begin with the raw amino-acid sequence, 66 residues long: Small ribosomal subunit protein eS27 (66 aa).

4 residues coordinate Zn(2+): Cys-21, Cys-24, Cys-40, and Cys-43. Residues 21–43 form a C4-type zinc finger; it reads CRQCNNEQVIFSNATFPVRCLSC.

This sequence belongs to the eukaryotic ribosomal protein eS27 family. Part of the 30S ribosomal subunit. Requires Zn(2+) as cofactor.

The protein is Small ribosomal subunit protein eS27 of Sulfolobus acidocaldarius (strain ATCC 33909 / DSM 639 / JCM 8929 / NBRC 15157 / NCIMB 11770).